Reading from the N-terminus, the 217-residue chain is MQQFTVHKGLVAPMDRENVDTDAIIPKQFLKSIKKTGFGVNLFDEWRYLDHGEPGQDPASRKPNPDFVLNQPRYAGASILVARKNFGCGSSREHAPWALDQYGFRAILAPSFADIFFNNCFKNGLLPIVLPEATIDMLFNEIAAFPGYELTIDLDRQVIVRPQGEEIPFDVIAFRKFCLLNGFDDIGLTLRHADKIRAYEAERLATKPWLAHTLVQR.

It belongs to the LeuD family. LeuD type 1 subfamily. As to quaternary structure, heterodimer of LeuC and LeuD.

It catalyses the reaction (2R,3S)-3-isopropylmalate = (2S)-2-isopropylmalate. It functions in the pathway amino-acid biosynthesis; L-leucine biosynthesis; L-leucine from 3-methyl-2-oxobutanoate: step 2/4. In terms of biological role, catalyzes the isomerization between 2-isopropylmalate and 3-isopropylmalate, via the formation of 2-isopropylmaleate. The chain is 3-isopropylmalate dehydratase small subunit from Delftia acidovorans (strain DSM 14801 / SPH-1).